A 421-amino-acid chain; its full sequence is MMRARVPLLLLGILFLASLSASFATSLREEEESQDNPFYFNSDNSWNTLFKNQYGHIRVLQRFDQQSKRLQNLEDYRLVEFRSKPETLLLPQQADAELLLVVRSGSAILVLVKPDDRREYFFLTSDNPIFSDHQKIPAGTIFYLVNPDPKEDLRIIQLAMPVNNPQIHEFFLSSTEAQQSYLQEFSKHILEASFNSKFEEINRVLFEEEGQQEGVIVNIDSEQIKELSKHAKSSSRKSLSKQDNTIGNEFGNLTERTDNSLNVLISSIEMEEGALFVPHYYSKAIVILVVNEGEAHVELVGPKGNKETLEYESYRAELSKDDVFVIPAAYPVAIKATSNVNFTGFGINANNNNRNLLAGKTDNVISSIGRALDGKDVLGLTFSGSGDEVMKLINKQSGSYFVDAHHHQQEQQKGRKGAFVY.

An N-terminal signal peptide occupies residues 1-24 (MMRARVPLLLLGILFLASLSASFA). Residues 237–390 (KSLSKQDNTI…TFSGSGDEVM (154 aa)) enclose the Cupin type-1 domain. Asn252 and Asn341 each carry an N-linked (GlcNAc...) asparagine glycan.

This sequence belongs to the 7S seed storage protein family. As to quaternary structure, homotrimer that associates to form a dodecamer.

The protein resides in the vacuole. The protein localises to the aleurone grain. Major seed storage protein. This Phaseolus vulgaris (Kidney bean) protein is Phaseolin, beta-type.